Consider the following 412-residue polypeptide: AT-rich interactive domain-containing protein 3C (412 aa).

Over residues 1-23 (MEALQKQQAARLAQGVGPLAPAC) the composition is skewed to low complexity. The disordered stretch occupies residues 1 to 96 (MEALQKQQAA…SSQPPGLHPH (96 aa)). Residues 50 to 73 (AEEEEDAEEDEEKREEAGAEEEAA) show a composition bias toward acidic residues. The span at 78–87 (PGAQGPSSPS) shows a compositional bias: low complexity. Residues 113–205 (DPKRKEFLDD…YLYPYECETR (93 aa)) enclose the ARID domain. Disordered regions lie at residues 232–278 (TPLF…AHAC) and 388–412 (PVPASQGPTNPAPPPSTGPPSSILP). The span at 259-272 (TQSSPGPAQGSTSG) shows a compositional bias: polar residues. An REKLES domain is found at 304-389 (LALGPTREKL…GVLFARRQPV (86 aa)).

As to quaternary structure, interacts (via REKLES DOMAIN) with NPM1; the interaction mediates ARID3C nuclear shuttling.

The protein resides in the nucleus. Transcription factor involved in monocyte-to-macrophage differentiation. Forms a complex with NPM1 to translocate to the nucleus, acting as a transcription factor that promotes the expression of the genes involved in macrophage differentiation, such as STAT3, STAT1 and JUNB. This chain is AT-rich interactive domain-containing protein 3C, found in Homo sapiens (Human).